We begin with the raw amino-acid sequence, 1220 residues long: DNA polymerase catalytic subunit (1220 aa).

It belongs to the DNA polymerase type-B family. Forms a complex with the ssDNA-binding protein, the DNA polymerase processivity factor, and the alkaline exonuclease. Interacts with the helicase-primase complex composed of the primase, the helicase and the primase-associated factor; this interaction may coordinate leading and lagging strand DNA synthesis at the replication fork.

The protein localises to the host nucleus. The catalysed reaction is DNA(n) + a 2'-deoxyribonucleoside 5'-triphosphate = DNA(n+1) + diphosphate. The enzyme catalyses Endonucleolytic cleavage to 5'-phosphomonoester.. Functionally, replicates viral genomic DNA. The replication complex is composed of six viral proteins: the DNA polymerase, processivity factor, primase, primase-associated factor, helicase, and ssDNA-binding protein. Additionally, the polymerase contains an intrinsic ribonuclease H (RNase H) activity that specifically degrades RNA/DNA heteroduplexes or duplex DNA substrates in the 5' to 3' direction. Therefore, it can catalyze the excision of the RNA primers that initiate the synthesis of Okazaki fragments at a replication fork during viral DNA replication. This chain is DNA polymerase catalytic subunit (MDV043), found in Gallid herpesvirus 2 (strain Chicken/Md5/ATCC VR-987) (GaHV-2).